A 137-amino-acid polypeptide reads, in one-letter code: Phosphoribosyl-AMP cyclohydrolase (137 aa).

Asp-84 contacts Mg(2+). Cys-85 contacts Zn(2+). Positions 86 and 88 each coordinate Mg(2+). Residues Cys-101 and Cys-108 each contribute to the Zn(2+) site.

It belongs to the PRA-CH family. As to quaternary structure, homodimer. Requires Mg(2+) as cofactor. Zn(2+) is required as a cofactor.

It is found in the cytoplasm. It catalyses the reaction 1-(5-phospho-beta-D-ribosyl)-5'-AMP + H2O = 1-(5-phospho-beta-D-ribosyl)-5-[(5-phospho-beta-D-ribosylamino)methylideneamino]imidazole-4-carboxamide. It functions in the pathway amino-acid biosynthesis; L-histidine biosynthesis; L-histidine from 5-phospho-alpha-D-ribose 1-diphosphate: step 3/9. Catalyzes the hydrolysis of the adenine ring of phosphoribosyl-AMP. The sequence is that of Phosphoribosyl-AMP cyclohydrolase from Chlorobium phaeobacteroides (strain DSM 266 / SMG 266 / 2430).